Here is a 711-residue protein sequence, read N- to C-terminus: MKFFASCAKGLEYLLADELLALGASKATATISGVNVEGALRDAQRAVLWSRLASRVLWPLTEFDCPDEDALYAGVAELPWHEHLSTGHTLSVDAHVSGTAITHARYAAQRIKDAVVDTIRRQGLERPSVDVESPDLRLNLSLRKGRATISVDLGGGPLHRRGWRMAQNEAPLKENLAAAVLLRAGWPRAYADGGGLLDPMCGSGTLLIEGALMAADVAPGLQRYGSDIPSRWRGFDRDSWQQLVTEARERDSVGRAALKQVIHGSDMDPHAIRAAKENAQVAGVAEAIWFGVREVGDLQTRPQATGVVVCNPPYDERLAADAALYRKLGDTLQRVVPQWRASLLCGNAELAYATGLRAGKKYQLFNGAIECALIVCDPIAVPRRTPLAAPTALSEGAQMVANRLRKNLQKFKKWRAREGIECFRVYDADLPEYSAAIDVYQQADGDRRIFLHVQEYAAPATIPEADVRRRLGELLAAAREVFEVPAERVALKSRERGKGGSKYGRFEQRNEIVNVREHGALLRVNLFDYLDTGLFLDHRPLRGTMAQQSKGRRFLNLFCYTGVASVQAAVAGASATTSVDLSGTYLQWCADNLALNGQAGSKHKLVQADALAWLEAERAHFDVIFCDPPTFSNSARAEDFDIQREHVRLLRAAVARLAPGGVLYFSNNFRRFKLDEEAVSEFAQCEEISPRTIDPDFERHARIHRAWRLTA.

One can recognise a THUMP domain in the interval 42–153 (DAQRAVLWSR…KGRATISVDL (112 aa)).

It belongs to the methyltransferase superfamily. RlmKL family.

Its subcellular location is the cytoplasm. The enzyme catalyses guanosine(2445) in 23S rRNA + S-adenosyl-L-methionine = N(2)-methylguanosine(2445) in 23S rRNA + S-adenosyl-L-homocysteine + H(+). It carries out the reaction guanosine(2069) in 23S rRNA + S-adenosyl-L-methionine = N(2)-methylguanosine(2069) in 23S rRNA + S-adenosyl-L-homocysteine + H(+). Functionally, specifically methylates the guanine in position 2445 (m2G2445) and the guanine in position 2069 (m7G2069) of 23S rRNA. The protein is Ribosomal RNA large subunit methyltransferase K/L of Xanthomonas campestris pv. campestris (strain 8004).